The chain runs to 259 residues: MNAASLTGITALSIGKDIKLNSAEELEAALRHIGATRYHSLHPFHKLLHGGKLNKGQVQAWALNRYYYQSTIPIKDAVVISRFRDRATRLEWRHRIEDHDGDVGSEGGIERWLKLTEGLGLDTAYVESTEGILPATRFAVEAYVHYCREKSPLEAIASSLTELFAPSIHEERIAGMLQHYDFVNPDIMSYFKRRLTQAPRDANFALEYVRTHARTPEERASVCNALIFKTNVLWVQLDALQHAYVEGHIPPGAFVPKEN.

The protein belongs to the PqqC family.

It carries out the reaction 6-(2-amino-2-carboxyethyl)-7,8-dioxo-1,2,3,4,7,8-hexahydroquinoline-2,4-dicarboxylate + 3 O2 = pyrroloquinoline quinone + 2 H2O2 + 2 H2O + H(+). It participates in cofactor biosynthesis; pyrroloquinoline quinone biosynthesis. Its function is as follows. Ring cyclization and eight-electron oxidation of 3a-(2-amino-2-carboxyethyl)-4,5-dioxo-4,5,6,7,8,9-hexahydroquinoline-7,9-dicarboxylic-acid to PQQ. The sequence is that of Pyrroloquinoline-quinone synthase from Bradyrhizobium diazoefficiens (strain JCM 10833 / BCRC 13528 / IAM 13628 / NBRC 14792 / USDA 110).